The primary structure comprises 967 residues: Kinesin heavy chain (967 aa).

In terms of domain architecture, Kinesin motor spans 8–326 (NIKVICRVRP…LLFGQRAKTI (319 aa)). Residue 85–92 (GQTSSGKT) coordinates ATP. The segment at 173 to 314 (VSSPEEVMEV…PASYNESETK (142 aa)) is microtubule-binding. Disordered stretches follow at residues 387–411 (VPAE…NEGD) and 923–967 (KPIR…ESKA). Residues 392 to 861 (PATSTTSLAG…RDNADLRCEL (470 aa)) adopt a coiled-coil conformation. A globular region spans residues 862–967 (PKLEKRLRAT…PIRMAPESKA (106 aa)). The span at 949–958 (QNGPMITSTP) shows a compositional bias: polar residues.

The protein belongs to the TRAFAC class myosin-kinesin ATPase superfamily. Kinesin family. Kinesin subfamily. Oligomer composed of two heavy chains and two light chains. Interacts with amyloid-beta precursor-like protein (via cytoplasmic domain).

The protein resides in the cytoplasm. It is found in the cytoskeleton. It localises to the cell projection. The protein localises to the axon. Kinesin is a microtubule-associated force-producing protein that may play a role in organelle transport. This Doryteuthis pealeii (Longfin inshore squid) protein is Kinesin heavy chain.